Reading from the N-terminus, the 35-residue chain is Dolichyl-diphosphooligosaccharide--protein glycosyltransferase subunit 4C (35 aa).

Over 1 to 8 the chain is Lumenal; the sequence is MFDDQDLG. A helical membrane pass occupies residues 9-29; it reads FFANFLGIFIFILVIAYHFVM. Residues 30–35 are Cytoplasmic-facing; sequence ADPKFE.

The protein belongs to the OST4 family. Component of the oligosaccharyltransferase (OST) complex.

Its subcellular location is the endoplasmic reticulum membrane. In terms of biological role, subunit of the oligosaccharyl transferase (OST) complex that catalyzes the initial transfer of a defined glycan (Glc(3)Man(9)GlcNAc(2) in eukaryotes) from the lipid carrier dolichol-pyrophosphate to an asparagine residue within an Asn-X-Ser/Thr consensus motif in nascent polypeptide chains, the first step in protein N-glycosylation. N-glycosylation occurs cotranslationally and the complex associates with the Sec61 complex at the channel-forming translocon complex that mediates protein translocation across the endoplasmic reticulum (ER). All subunits are required for a maximal enzyme activity. This is Dolichyl-diphosphooligosaccharide--protein glycosyltransferase subunit 4C (OST4C) from Arabidopsis thaliana (Mouse-ear cress).